Consider the following 323-residue polypeptide: Dehydrogenase/reductase SDR family member 7B (323 aa).

The Cytoplasmic portion of the chain corresponds to 1-17; sequence MISPSFRKGMLKERVMD. The chain crosses the membrane as a helical; Signal-anchor for type II membrane protein span at residues 18 to 38; that stretch reads LASQTTILPLLFGCLGIFSLF. Topologically, residues 39–323 are lumenal; that stretch reads RLLQRIRSKA…ARKERKSKSS (285 aa). NAD(+) is bound by residues S62 and L64. Residue S192 coordinates substrate. The NAD(+) site is built by Y205, K209, and T240. The active-site Proton acceptor is the Y205.

This sequence belongs to the short-chain dehydrogenases/reductases (SDR) family.

It is found in the endoplasmic reticulum membrane. Its function is as follows. Putative oxidoreductase. The sequence is that of Dehydrogenase/reductase SDR family member 7B from Mus musculus (Mouse).